A 462-amino-acid polypeptide reads, in one-letter code: tRNA modification GTPase MnmE (462 aa).

3 residues coordinate (6S)-5-formyl-5,6,7,8-tetrahydrofolate: arginine 27, glutamate 89, and arginine 128. A TrmE-type G domain is found at 224-383 (GLATAIVGRP…LEAQIAKLFF (160 aa)). Asparagine 234 provides a ligand contact to K(+). GTP contacts are provided by residues 234–239 (NVGKSS), 253–259 (TDVAGTT), and 278–281 (DTAG). Mg(2+) is bound at residue serine 238. Threonine 253, valine 255, and threonine 258 together coordinate K(+). Position 259 (threonine 259) interacts with Mg(2+). Lysine 462 contacts (6S)-5-formyl-5,6,7,8-tetrahydrofolate.

Belongs to the TRAFAC class TrmE-Era-EngA-EngB-Septin-like GTPase superfamily. TrmE GTPase family. Homodimer. Heterotetramer of two MnmE and two MnmG subunits. K(+) is required as a cofactor.

It localises to the cytoplasm. Functionally, exhibits a very high intrinsic GTPase hydrolysis rate. Involved in the addition of a carboxymethylaminomethyl (cmnm) group at the wobble position (U34) of certain tRNAs, forming tRNA-cmnm(5)s(2)U34. This Latilactobacillus sakei subsp. sakei (strain 23K) (Lactobacillus sakei subsp. sakei) protein is tRNA modification GTPase MnmE.